The chain runs to 56 residues: Bdellin B-3 (56 aa).

A Kazal-like domain is found at 1 to 42 (DTECVCTKELHRVCGSDGVTYDNECLATCHGASVAHDHACEG). Cystine bridges form between C4/C29, C6/C25, and C14/C40.

Functionally, proteinase inhibitor. Blocks the activity of trypsin, plasmin and sperm acrosin. This chain is Bdellin B-3, found in Hirudo medicinalis (Medicinal leech).